A 401-amino-acid chain; its full sequence is E3 ubiquitin-protein ligase RGLG4 (401 aa).

Residues 1–43 (MTMGNFLKRFGSGKSRSSRNMTLGTTSSQSHEPSPSDPSLSLA) are disordered. Residues 8–19 (KRFGSGKSRSSR) are compositionally biased toward low complexity. A compositionally biased stretch (polar residues) spans 20 to 32 (NMTLGTTSSQSHE). The region spanning 79 to 299 (NLILGVDFTK…KETAFALAAL (221 aa)) is the VWFA domain. Positions 326 to 350 (VPRPPPIPYTPPTNAELPSTASPAS) are disordered. The segment covering 327–336 (PRPPPIPYTP) has biased composition (pro residues). Residues 341-350 (ELPSTASPAS) are compositionally biased toward polar residues. The RING-type zinc finger occupies 357 to 390 (CPICLTNRKDVAFSCGHMTCGDCGSKISNCPICR).

Interacts with UBC30, GRXS17 and GLB3. As to expression, widely expressed.

Its subcellular location is the cytoplasm. It is found in the nucleus. It catalyses the reaction S-ubiquitinyl-[E2 ubiquitin-conjugating enzyme]-L-cysteine + [acceptor protein]-L-lysine = [E2 ubiquitin-conjugating enzyme]-L-cysteine + N(6)-ubiquitinyl-[acceptor protein]-L-lysine.. Its function is as follows. Possesses E3 ubiquitin-protein ligase in vitro. Acts as upstream modulator of jasmonate (JA) signaling in response to various stimuli, such as JA-inhibited root growth, JA-inductive gene expression, coronatine-mediated pathogen susceptibility, wound-stimulated expression of JA-responsive genes and wound-induced JA biosynthesis. Controls fumonisin B1 (FB1)-triggered programmed cell death (PCD) by modulating the JA signaling pathway. May mediate salicylic acid (SA) suppression of JA signaling in FB1-induced responses. May mediate the formation of 'Lys-48'-linked multiubiquitin chains. Mediates the polyubiquitination and subsequent proteasomal degradation of the target protein GRXS17. The sequence is that of E3 ubiquitin-protein ligase RGLG4 from Arabidopsis thaliana (Mouse-ear cress).